The sequence spans 98 residues: Small ribosomal subunit protein bS20 (98 aa).

It belongs to the bacterial ribosomal protein bS20 family.

Its function is as follows. Binds directly to 16S ribosomal RNA. This Synechococcus elongatus (strain ATCC 33912 / PCC 7942 / FACHB-805) (Anacystis nidulans R2) protein is Small ribosomal subunit protein bS20.